Reading from the N-terminus, the 152-residue chain is SKP1-like protein 8 (152 aa).

Positions 94 to 152 (TNAANFLNNKSLLHLAGQTVADMIKGNTPKQMREFFNIENDLTPEEEAAIRRENKWAFE) are interaction with the F-box domain of F-box proteins.

Belongs to the SKP1 family. As to quaternary structure, part of a SCF (SKP1-cullin-F-box) protein ligase complex. Restricted to siliques.

It is found in the nucleus. It functions in the pathway protein modification; protein ubiquitination. Involved in ubiquitination and subsequent proteasomal degradation of target proteins. Together with CUL1, RBX1 and a F-box protein, it forms a SCF E3 ubiquitin ligase complex. The functional specificity of this complex depends on the type of F-box protein. In the SCF complex, it serves as an adapter that links the F-box protein to CUL1. The protein is SKP1-like protein 8 (ASK8) of Arabidopsis thaliana (Mouse-ear cress).